A 144-amino-acid chain; its full sequence is MAQKIEGHINLNVNAGEATAAPPIGSTLGQRKVNIMEFCKAFNAATQSIEKGTPLPTVITIYVDKSFTFIVKTPPASYLIKKYAKVKKGSGATKKEAVVGKITMDDCREIAKLKMPDLNTKDIKAATKIICGSAASMGIEVVGN.

Belongs to the universal ribosomal protein uL11 family. As to quaternary structure, part of the ribosomal stalk of the 50S ribosomal subunit. Interacts with L10 and the large rRNA to form the base of the stalk. L10 forms an elongated spine to which L12 dimers bind in a sequential fashion forming a multimeric L10(L12)X complex. In terms of processing, one or more lysine residues are methylated.

In terms of biological role, forms part of the ribosomal stalk which helps the ribosome interact with GTP-bound translation factors. The polypeptide is Large ribosomal subunit protein uL11 (Rickettsia bellii (strain OSU 85-389)).